The following is a 545-amino-acid chain: Probable intron-encoded endonuclease 4 (545 aa).

7 consecutive transmembrane segments (helical) span residues 1–21 (MYLSIIILPLLGSIVAGFFGR), 30–50 (LITCLSVIITTGLAILAFFEV), 81–101 (LTVAMLIPVLIISSLVHIYSI), 119–139 (LFTFMMIILVTANNYLLMFVG), 140–160 (WEGVGVCSYLLVSFWFTRIAA), 177–197 (FLTIGMFVVLWTLGNLDYATV), and 200–220 (LAPYINSDIATIIGICLLIGA). The tract at residues 1 to 239 (MYLSIIILPL…HVWLPMAMEG (239 aa)) is ndh-5 exons 1 and 2 encoded. Residues 240 to 545 (FFSRAFLKLH…NNINKSDYNK (306 aa)) are ndh-5 intron 2 encoded.

In the N-terminal section; belongs to the complex I subunit 5 family. The protein in the C-terminal section; belongs to the LAGLIDADG endonuclease family.

It localises to the mitochondrion membrane. Mitochondrial DNA endonuclease involved in intron homing. The sequence is that of Probable intron-encoded endonuclease 4 from Neurospora crassa (strain ATCC 24698 / 74-OR23-1A / CBS 708.71 / DSM 1257 / FGSC 987).